A 388-amino-acid chain; its full sequence is Probable aspartic-type endopeptidase MCYG_06955 (388 aa).

The first 21 residues, 1–21 (MMGPFFYFTAYVSLLFAFTQA), serve as a signal peptide directing secretion. 2 N-linked (GlcNAc...) asparagine glycosylation sites follow: Asn-82 and Asn-104. One can recognise a Peptidase A1 domain in the interval 96–384 (FVNEITVGND…DYDGPKIGFA (289 aa)). Residue Asp-112 is part of the active site. Asn-209 and Asn-261 each carry an N-linked (GlcNAc...) asparagine glycan. Asp-278 is a catalytic residue. 2 N-linked (GlcNAc...) asparagine glycosylation sites follow: Asn-315 and Asn-320.

It belongs to the peptidase A1 family.

The protein resides in the secreted. Functionally, probable aspartic-type endopeptidase which contributes to virulence. The protein is Probable aspartic-type endopeptidase MCYG_06955 of Arthroderma otae (strain ATCC MYA-4605 / CBS 113480) (Microsporum canis).